The sequence spans 427 residues: Enolase 2 (427 aa).

Q165 lines the (2R)-2-phosphoglycerate pocket. E207 serves as the catalytic Proton donor. Mg(2+) is bound by residues D244, E287, and D314. The (2R)-2-phosphoglycerate site is built by K339, R368, S369, and K390. The active-site Proton acceptor is the K339.

Belongs to the enolase family. Component of the RNA degradosome, a multiprotein complex involved in RNA processing and mRNA degradation. The cofactor is Mg(2+).

Its subcellular location is the cytoplasm. It is found in the secreted. The protein resides in the cell surface. It catalyses the reaction (2R)-2-phosphoglycerate = phosphoenolpyruvate + H2O. The protein operates within carbohydrate degradation; glycolysis; pyruvate from D-glyceraldehyde 3-phosphate: step 4/5. Catalyzes the reversible conversion of 2-phosphoglycerate (2-PG) into phosphoenolpyruvate (PEP). It is essential for the degradation of carbohydrates via glycolysis. The chain is Enolase 2 from Pseudomonas syringae pv. tomato (strain ATCC BAA-871 / DC3000).